We begin with the raw amino-acid sequence, 501 residues long: DELTA-alicitoxin-Pse2a (501 aa).

The N-terminal stretch at 1 to 22 (MSPYFKLSSALIFLAITMEALC) is a signal peptide. A propeptide spanning residues 23–35 (SPIENTSTSNKDN) is cleaved from the precursor. One can recognise an MACPF domain in the interval 23 to 359 (SPIENTSTSN…GFLHFGCSYL (337 aa)). A coiled-coil region spans residues 135 to 159 (AAVTNNIASSEEEVQGLSLNLKAYS). The 35-residue stretch at 388 to 422 (VCKVGPEGCQHHEDCHYRAAFWCECGGPYDLARTC) folds into the EGF-like domain. Disulfide bonds link cysteine 389–cysteine 402, cysteine 396–cysteine 410, and cysteine 412–cysteine 422.

Its subcellular location is the secreted. It is found in the nematocyst. In terms of biological role, causes lethal toxicity to the shrimp Palaemon paucidence, and hemolytic activity toward sheep red blood cells. This Phyllodiscus semoni (Night anemone) protein is DELTA-alicitoxin-Pse2a.